The primary structure comprises 204 residues: Dihydroorotase (204 aa).

Residue histidine 34 participates in Zn(2+) binding. Leucine 79 lines the substrate pocket. Zn(2+) is bound at residue aspartate 107. The active site involves aspartate 107. Substrate is bound by residues histidine 111 and alanine 123.

It belongs to the metallo-dependent hydrolases superfamily. DHOase family. Class II DHOase subfamily. As to quaternary structure, homodimer. Zn(2+) serves as cofactor.

The enzyme catalyses (S)-dihydroorotate + H2O = N-carbamoyl-L-aspartate + H(+). The protein operates within pyrimidine metabolism; UMP biosynthesis via de novo pathway; (S)-dihydroorotate from bicarbonate: step 3/3. In terms of biological role, catalyzes the reversible cyclization of carbamoyl aspartate to dihydroorotate. The polypeptide is Dihydroorotase (Serratia marcescens).